Here is a 160-residue protein sequence, read N- to C-terminus: Leucokinin (160 aa).

Residues 1 to 19 (MAKIVLCMVLLAFGRQVYG) form the signal peptide. Positions 20–130 (ASLVPAPISE…RIKSQLQRDE (111 aa)) are excised as a propeptide. Gly-147 carries the glycine amide modification. Positions 151-160 (SPEPPILPDY) are excised as a propeptide.

Its subcellular location is the secreted. Its function is as follows. Acts through intracellular calcium in Malpighian tubule stellate cells to raise chloride conductance. The sequence is that of Leucokinin (Lk) from Drosophila melanogaster (Fruit fly).